The sequence spans 160 residues: uncharacterized protein (160 aa).

Phosphotyrosine is present on Tyr49.

May be involved in the assembly, structure, or function of the flagellum. May polymerize to form a filamentous structure that is part of the flagellum. This is an uncharacterized protein from Bacillus subtilis (strain 168).